A 300-amino-acid chain; its full sequence is Recombination-associated protein RdgC (300 aa).

It belongs to the RdgC family.

The protein localises to the cytoplasm. It localises to the nucleoid. In terms of biological role, may be involved in recombination. The chain is Recombination-associated protein RdgC from Herminiimonas arsenicoxydans.